We begin with the raw amino-acid sequence, 169 residues long: Chorismate pyruvate-lyase (169 aa).

The substrate site is built by Met-37, Arg-79, Leu-117, and Glu-158.

This sequence belongs to the UbiC family. In terms of assembly, monomer.

It localises to the cytoplasm. It catalyses the reaction chorismate = 4-hydroxybenzoate + pyruvate. Its pathway is cofactor biosynthesis; ubiquinone biosynthesis. Its function is as follows. Removes the pyruvyl group from chorismate, with concomitant aromatization of the ring, to provide 4-hydroxybenzoate (4HB) for the ubiquinone pathway. The sequence is that of Chorismate pyruvate-lyase from Proteus mirabilis (strain HI4320).